The primary structure comprises 332 residues: PTS-dependent dihydroxyacetone kinase, dihydroxyacetone-binding subunit DhaK (332 aa).

The DhaK domain maps to 9-331; that stretch reads QPQDVVSEML…LNEDVKTISW (323 aa). Dihydroxyacetone is bound by residues 55–58, K106, and D111; that span reads GSGH. H58 functions as the Proton acceptor in the catalytic mechanism. H220 serves as the catalytic Tele-hemiaminal-histidine intermediate.

As to quaternary structure, homodimer. The dihydroxyacetone kinase complex is composed of a homodimer of DhaM, a homodimer of DhaK and the subunit DhaL.

It catalyses the reaction dihydroxyacetone + phosphoenolpyruvate = dihydroxyacetone phosphate + pyruvate. It functions in the pathway polyol metabolism; glycerol degradation. Dihydroxyacetone binding subunit of the dihydroxyacetone kinase, which is responsible the phosphoenolpyruvate (PEP)-dependent phosphorylation of dihydroxyacetone via a phosphoryl group transfer from DhaL-ATP. In Lactococcus lactis subsp. lactis (strain IL1403) (Streptococcus lactis), this protein is PTS-dependent dihydroxyacetone kinase, dihydroxyacetone-binding subunit DhaK.